A 275-amino-acid chain; its full sequence is MANPTIIRLQDGNVMPQLGLGVWKASNEEVIAAIHKALEVGYRSIDTATAYQNEEGVGKALKAASVAREELFITTKLWNDDQKRPREALQESLKKLQLDYLDLYLMHWPVPAIDHYVDAWKGMIALQKEGLVKSIGVCNFQIHHLQRLIDETGVPPVINQIELHPLMQQRQLHAWNATHKIQTESWSPLAQGGEGVFDQKVIRELADKYGKTPAQIVIRWHLDCGLVVIPKSVTPSRIAENFAVWDFRLDKDELGEIAKLDQGKRLGPDPDQSGG.

The active-site Proton donor is the Y51. Residue H107 participates in substrate binding. Residue 187–241 (SPLAQGGEGVFDQKVIRELADKYGKTPAQIVIRWHLDCGLVVIPKSVTPSRIAEN) participates in NADP(+) binding.

This sequence belongs to the aldo/keto reductase family. In terms of assembly, monomer.

The protein resides in the cytoplasm. The catalysed reaction is hydroxyacetone + NADP(+) = methylglyoxal + NADPH + H(+). In terms of biological role, aldo-keto reductase that significantly contributes to cellular methylglyoxal detoxification by catalyzing the NADPH-dependent conversion of methylglyoxal to acetol. The sequence is that of Putative methylglyoxal reductase DkgA from Salmonella typhi.